A 252-amino-acid chain; its full sequence is MAGHSKFKNIQHRKCAQDKKRAKVFTKLIREIVTAVKTGSSNIPENNPRLRNALTAARSQNLPKERIDKAINSADDANTENYTEIRYEGYAPNGIAIIVEALTDNKNRTAAEVRSSFTKYGGSLGETGSVNYLFKHCGVIQYPTNIASNEDIFEAAIEAGGDDIVSDAIFHTICTDIENFSKVLEFLTGKYGIPEDSYIGWIPLNTIIIDDTEKAEKLLKLVEALEESDDVQRVFSNYEFSDDVYEIIQGEE.

The protein belongs to the TACO1 family.

The protein resides in the cytoplasm. The chain is Probable transcriptional regulatory protein A1C_04175 from Rickettsia akari (strain Hartford).